The following is a 231-amino-acid chain: Non-fluorescent flavoprotein (231 aa).

This sequence belongs to the bacterial luciferase oxidoreductase family. In terms of assembly, homodimer. The cofactor is FMN.

The sequence is that of Non-fluorescent flavoprotein (luxF) from Photobacterium phosphoreum.